The primary structure comprises 232 residues: MTATKMNAQEIIQFIANAEKKTSVKVTFEGQLATAVPSSVVKLGNVLFGDWKDVAPLLEGLVENQDYVVEQDARNSAVPLLDKRAINARIEPGAIIRDQVKIGDNAVIMMGAVINIGAEIGAGTMIDMGAILGGRAIVGKNSHVGAGAVLAGVIEPVSAEPVRVGDNVLIGANAVVIEGVQIGSGSVVAAGAIVTQDVPENVVVAGVPARIIKEIDAQTQQKTALEDALRTL.

This sequence belongs to the transferase hexapeptide repeat family. DapH subfamily.

It carries out the reaction (S)-2,3,4,5-tetrahydrodipicolinate + acetyl-CoA + H2O = L-2-acetamido-6-oxoheptanedioate + CoA. It functions in the pathway amino-acid biosynthesis; L-lysine biosynthesis via DAP pathway; LL-2,6-diaminopimelate from (S)-tetrahydrodipicolinate (acetylase route): step 1/3. Functionally, catalyzes the transfer of an acetyl group from acetyl-CoA to tetrahydrodipicolinate. This is 2,3,4,5-tetrahydropyridine-2,6-dicarboxylate N-acetyltransferase from Streptococcus pneumoniae (strain Taiwan19F-14).